Reading from the N-terminus, the 151-residue chain is Large-conductance mechanosensitive channel (151 aa).

Helical transmembrane passes span 19 to 39 (VGIIIGGAFTGIVKSLVGDVL) and 85 to 105 (GLFINAFISFVIMAVAVFFLV).

The protein belongs to the MscL family. Homopentamer.

It localises to the cell inner membrane. In terms of biological role, channel that opens in response to stretch forces in the membrane lipid bilayer. May participate in the regulation of osmotic pressure changes within the cell. This is Large-conductance mechanosensitive channel from Chlorobaculum parvum (strain DSM 263 / NCIMB 8327) (Chlorobium vibrioforme subsp. thiosulfatophilum).